The primary structure comprises 956 residues: RNA-binding protein 44 (956 aa).

Residues 301–321 (DNTQNNQNQSYNPTEENDHNV) are disordered. The RRM domain maps to 750-824 (SLLCITCLPG…HAVQVVHLSG (75 aa)). Positions 831-855 (KPSDLSHSASESHKEDTAGDELRTK) are disordered. The span at 840 to 854 (SESHKEDTAGDELRT) shows a compositional bias: basic and acidic residues.

Its subcellular location is the cytoplasm. Functionally, component of intercellular bridges during meiosis. Intercellular bridges are evolutionarily conserved structures that connect differentiating germ cells. Not required for fertility. The protein is RNA-binding protein 44 (rbm44) of Danio rerio (Zebrafish).